A 152-amino-acid polypeptide reads, in one-letter code: Protein FERTILITY RESTORER RF2, mitochondrial (152 aa).

Residues 1-52 (MSTLVTCSLPGAVTTHASTRRFGGSQFQTSQASCISFKREVSAKAVLRSVRC) constitute a mitochondrion transit peptide. Residues 52–69 (CNATQTQSAQRKSSTATV) are compositionally biased toward polar residues. Residues 52–101 (CNATQTQSAQRKSSTATVKRSDPKGKTQGPKLDDGSGGFPPFRFGKGGGG) are disordered.

The protein localises to the mitochondrion. Functionally, non-functional allele of the RF2 fertility restorer of rice varieties with LD-type cytoplasmic male sterility (CMS). Non-functional RF2 alleles are found in japonica cultivars Taichung 65 and Nipponbare (AC F1SZ44), and is due to the presence of Thr-78 which replaces Ile-78 in the functional allele. Functional allele is found in the japonica cultivars Fukuyama and Owarihatamochi (AC F1SZ42), and indica cultivar Kasalath (AC F1SZ41). The polypeptide is Protein FERTILITY RESTORER RF2, mitochondrial (Oryza sativa subsp. japonica (Rice)).